The following is a 1848-amino-acid chain: MAAPSPAGGAPSHAQSSLPSLPAHLQSDTHLTAHLASRFHVGLPTARLSSQALISLNTYTTSTKGPDGGKEGSAMGEAEDLAKRAFTRLGARGENQAVVFLGESGSGKTTIRSHLLSAFLSFSSTPLSSKLSYAAFLFDTLTTTKSLTTQTASKAGLFLELQYDGSSSVNPTLIGGKIIDHRLERSRITSVPTGERSFHVLYYLLAGTSPAEKAHLGFDKAVHVSTSSGAIGHKRWRYLGHPTQLKVGVNDVEGFQHFKTALRKLEFPRSEIAEICQILATILHIGQLEFASGQATTTHAEESGGYSHEGGETVTIVKNKDVLSIIAAFLGLSVEDLENSFGYRTKTIHRERVTVMLDPKGARQNADELARTIYSLLVAYVIEAVNQRICAAEDSVANTISIVDFPGFAQACATGSTLDQLFNNAATELLYNFCLQSFFDRKADELEREEVSVPATSYFDNTDAVRGLLKHGNGLLSILDDQTRRGRTDNQLLESLRRRFENKNPTIIVEGSKRTSLISQNARSAFTVKHFAGEIDYSVNGLIEENGEFISGDLMRLMKSTKSDFVRELFGQAALQTVTHPKEKTAIMQAQVSSKPLRMPSMARRKTSPSSRLAFDAGDADEVESQAESIAKDSSSGRRKSAMLTSGIQGAAGQFLSSLDIVNKCLSSTNLNPYFIFCLKPNDRRIANQFDSKCVRAQVQMFGIAEISQRLRNADFSVFLPFAEFLGLAEIGNIVVGSDKEKAEVVLDEKRWPGNEARVGSTGVFLSERCWADLAKVGERVVPVYAADMSDEGGDGLLHPRSTGYGDSKVRLLNPADQSPGAFIYGDEAKQGYFGSRDLDGRSDAGNSAFNSGDMFRNHETREQMLEKGNEKKMEEVDDAPISGSRKRWIALVYLLTFYIPDFAIKLFGRIKRKDVRMAWREKFAINLIIWFSCGVAIFFIVAFPGLVCPTQHVYSAAELSSHNGKDGHSSFIAIRGVVFDLDKFMPGHYPHIVPESALKKYAGVDATGLFPVQVSALCQGKSGSVDPMVLLDYRPTNISGSATTISGTDTNSVYHDFRHFTNDSRPDWFYEQMVMLKANYLKGYVGYTPKYLNTLGKKSQSIGSINGKVYDLTSYIAGGRLTKAPPGETVPSDVDTDFMDNSVVSLFQSLPGQDLSKHWENLKIDPALRRRMQLCLDNLFFVGHVDTRNSAQCEFARYFILAISVLICSIIVFKFLAALQFGRKNVPENLDKFIICQVPAYTEDEESLRRAIDSMARMRYDDKRKLLVVICDGMIIGQGNDRPTPRIVLDILGVPESVDPEPLSFESLGEGQKQHNMGKVYSGLYEVQGHIVPFLVIVKVGKPSEVSRPGNRGKRDSQMVLMRFLNRVHYNLPMSPMELEMHHQIRNVIGVNPTFYEFILQVDADTVVAPDSATRMVAAFLNDTRLIGVCGETALTNAKNSAVTMIQVYEYYISHNLTKAFESLFGSVTCLPGCFTMYRIRSAETAKPLFVSKEVVDAYAEIRVDTLHMKNLLHLGEDRYLTTLLLKHHSKYKTKYISSAKAWTIAPESWTVFLSQRRRWINSTVHNLIELIPMQQLCGFCCFSMRFVVFVDLLSTVIQPVTLAYIIYLIYWLVKDTSTIPYTSLILLAAIYGLQALIFIIRRKWEMVGWMIVYLLALPVFSLALPLYSFWHMDDFTWGNTRIITGEKGRKVVISDEGKFDPASIPKKKWEEYQTELWEAQTSRDDRSEVSGISYGTKSYHPAQSEYGFPGSRPMSQLDLPRFGSRMSLAPSEMMSRHADMEMENLSHLPSDDAILAEIREILRTADLMSVTKKSIKLELERRFGVNLDLKRPYINSATEAVLAGAL.

Over residues 1–17 the composition is skewed to low complexity; the sequence is MAAPSPAGGAPSHAQSS. Positions 1–22 are disordered; it reads MAAPSPAGGAPSHAQSSLPSLP. A Myosin motor domain is found at 1-779; it reads MAAPSPAGGA…CWADLAKVGE (779 aa). 102-109 is an ATP binding site; the sequence is GESGSGKT. The tract at residues 593–621 is disordered; that stretch reads SSKPLRMPSMARRKTSPSSRLAFDAGDAD. Residues 659–683 form an actin-binding region; it reads LDIVNKCLSSTNLNPYFIFCLKPND. 2 helical membrane passes run 889–909 and 928–948; these read WIAL…KLFG and LIIW…PGLV. The region spanning 952-1040 is the Cytochrome b5 heme-binding domain; that stretch reads QHVYSAAELS…LLDYRPTNIS (89 aa). N1038 and N1063 each carry an N-linked (GlcNAc...) asparagine glycan. The helical transmembrane segment at 1200 to 1220 threads the bilayer; the sequence is FILAISVLICSIIVFKFLAAL. N-linked (GlcNAc...) asparagine glycans are attached at residues N1423, N1457, and N1563. Transmembrane regions (helical) follow at residues 1595-1615, 1621-1641, and 1648-1668; these read LSTV…YWLV, IPYT…LIFI, and MVGW…ALPL. The N-linked (GlcNAc...) asparagine glycan is linked to N1786. The region spanning 1790-1845 is the DEK-C domain; it reads LPSDDAILAEIREILRTADLMSVTKKSIKLELERRFGVNLDLKRPYINSATEAVLA.

This sequence in the N-terminal section; belongs to the TRAFAC class myosin-kinesin ATPase superfamily. Myosin family. It in the C-terminal section; belongs to the chitin synthase family. Class V subfamily.

The protein resides in the cell membrane. It localises to the cell septum. Its subcellular location is the cell tip. The catalysed reaction is [(1-&gt;4)-N-acetyl-beta-D-glucosaminyl](n) + UDP-N-acetyl-alpha-D-glucosamine = [(1-&gt;4)-N-acetyl-beta-D-glucosaminyl](n+1) + UDP + H(+). Its function is as follows. Polymerizes chitin, a structural polymer of the cell wall and septum, by transferring the sugar moiety of UDP-GlcNAc to the non-reducing end of the growing chitin polymer. Important for hyphal growth and conidiophore development but not pathogenicity. The protein is Chitin synthase E of Aspergillus fumigatus (strain ATCC MYA-4609 / CBS 101355 / FGSC A1100 / Af293) (Neosartorya fumigata).